Reading from the N-terminus, the 251-residue chain is MTDAIRPLIAGNWKMNGLKASAAEFDAMLNGAADVATKADLLVCPPATLIAAFADKARGKKVAVGAQDCHPKASGAHTGDIAAEMLANAGATAIIVGHSERRADHGEGDALVRQKAEAAWRAGVTAIVCIGETQAQRDAGQTLDILRGQLDGSLPDGSTAANLVVAYEPVWAIGTGLTPTVQDVEQIHGFIREFLTSRFSVDGAKMRILYGGSVKPSNAAELMAVKNVNGALVGGASLKAADFLAIAKGCP.

12-14 serves as a coordination point for substrate; sequence NWK. His98 (electrophile) is an active-site residue. Glu168 functions as the Proton acceptor in the catalytic mechanism. Substrate contacts are provided by residues Gly174, Ser213, and 234 to 235; that span reads GG.

It belongs to the triosephosphate isomerase family. Homodimer.

Its subcellular location is the cytoplasm. It catalyses the reaction D-glyceraldehyde 3-phosphate = dihydroxyacetone phosphate. The protein operates within carbohydrate biosynthesis; gluconeogenesis. It functions in the pathway carbohydrate degradation; glycolysis; D-glyceraldehyde 3-phosphate from glycerone phosphate: step 1/1. Involved in the gluconeogenesis. Catalyzes stereospecifically the conversion of dihydroxyacetone phosphate (DHAP) to D-glyceraldehyde-3-phosphate (G3P). This Bradyrhizobium diazoefficiens (strain JCM 10833 / BCRC 13528 / IAM 13628 / NBRC 14792 / USDA 110) protein is Triosephosphate isomerase.